The sequence spans 137 residues: Large ribosomal subunit protein bL21 (137 aa).

Residues 1–26 (MADTKTATPATDAEEATATPPAAAPS) form a disordered region.

The protein belongs to the bacterial ribosomal protein bL21 family. As to quaternary structure, part of the 50S ribosomal subunit. Contacts protein L20.

This protein binds to 23S rRNA in the presence of protein L20. The polypeptide is Large ribosomal subunit protein bL21 (Parasynechococcus marenigrum (strain WH8102)).